The sequence spans 115 residues: HTH-type transcriptional regulator SarR (115 aa).

Positions 51–74 (SKEIAKCSEFKPYYLTKALQKLKD) form a DNA-binding region, H-T-H motif.

This sequence belongs to the SarA family. In terms of assembly, homodimer.

The protein localises to the cytoplasm. In terms of biological role, negative regulator of sarA transcription at late exponential and stationary growth phases. It contributes to the modulation of target genes downstream of the sarA regulatory cascade. Also, positively regulates expression of primary transcripts RNAII and RNAIII generated by agr (virulence accessory gene regulator) locus. The polypeptide is HTH-type transcriptional regulator SarR (sarR) (Staphylococcus aureus (strain NCTC 8325 / PS 47)).